The sequence spans 471 residues: Ribulose bisphosphate carboxylase large chain (471 aa).

The substrate site is built by asparagine 119 and threonine 169. The active-site Proton acceptor is lysine 171. Lysine 173 is a substrate binding site. The Mg(2+) site is built by lysine 197, aspartate 199, and glutamate 200. Lysine 197 carries the N6-carboxylysine modification. Catalysis depends on histidine 290, which acts as the Proton acceptor. Substrate contacts are provided by arginine 291, histidine 323, and serine 375.

The protein belongs to the RuBisCO large chain family. Type I subfamily. As to quaternary structure, heterohexadecamer of 8 large chains and 8 small chains; disulfide-linked. The disulfide link is formed within the large subunit homodimers. Mg(2+) serves as cofactor. In terms of processing, the disulfide bond which can form in the large chain dimeric partners within the hexadecamer appears to be associated with oxidative stress and protein turnover.

The protein localises to the carboxysome. It carries out the reaction 2 (2R)-3-phosphoglycerate + 2 H(+) = D-ribulose 1,5-bisphosphate + CO2 + H2O. The catalysed reaction is D-ribulose 1,5-bisphosphate + O2 = 2-phosphoglycolate + (2R)-3-phosphoglycerate + 2 H(+). In terms of biological role, ruBisCO catalyzes two reactions: the carboxylation of D-ribulose 1,5-bisphosphate, the primary event in carbon dioxide fixation, as well as the oxidative fragmentation of the pentose substrate in the photorespiration process. Both reactions occur simultaneously and in competition at the same active site. This chain is Ribulose bisphosphate carboxylase large chain, found in Microcystis aeruginosa (strain NIES-843 / IAM M-2473).